The sequence spans 360 residues: Membrane-bound lytic murein transglycosylase C (360 aa).

The first 16 residues, 1–16 (MKKYLALALIAPLLVS), serve as a signal peptide directing secretion. Cys17 carries the N-palmitoyl cysteine lipid modification. Cys17 carries the S-diacylglycerol cysteine lipid modification.

It belongs to the transglycosylase Slt family.

It is found in the cell outer membrane. It carries out the reaction Exolytic cleavage of the (1-&gt;4)-beta-glycosidic linkage between N-acetylmuramic acid (MurNAc) and N-acetylglucosamine (GlcNAc) residues in peptidoglycan, from either the reducing or the non-reducing ends of the peptidoglycan chains, with concomitant formation of a 1,6-anhydrobond in the MurNAc residue.. In terms of biological role, murein-degrading enzyme. May play a role in recycling of muropeptides during cell elongation and/or cell division. In Klebsiella pneumoniae subsp. pneumoniae (strain ATCC 700721 / MGH 78578), this protein is Membrane-bound lytic murein transglycosylase C.